Here is a 508-residue protein sequence, read N- to C-terminus: MSILTTTALASILDWLAANAPKAELASDSRRIAQGDVFVAYPGDEADGRSYIANAIERGAQAVIYEAAGCTWDAEWDVAHLAIDDLKEHAGEIAAAYYAHPDRSMFTVAITGTNGKTSCAQWLGSALSRLGQPTAVIGTLGVGIFTNGGHGSFDVTGYTTPDAVLLQRSLVNVSNLGATALAIEASSIGLHQGRLSGMHFDMALFTNFTRDHLDYHGDMAAYEEAKAMLFDWPGLQHAVINLDDAMGVRLVQRLQSRQADVGITGYTLSDKKIDGIAVLRATDIRSNQSGTVFQLESSAGNTQVKTQLVGQFNVSNVLGIIGILLAKGIALQDAVNAVEALTAVPGRMQQLGGGEAPLVVIDYAHTPDALEKTLATLRSVANDRGGELWCVFGCGGDRDPGKRPQMGKVSMAADHIVVTTDNPRNEEPANIIGDIVAGITAPKNAPQIIEDRASAILWAGRHAARQDVILLAGKGHEAYQEVKGRKLPFLDADHAALALSTRVMQGAS.

UDP-N-acetyl-alpha-D-muramoyl-L-alanyl-D-glutamate is bound at residue Ser-29. 112–118 (GTNGKTS) lines the ATP pocket. Residues 159 to 160 (TT), Ser-186, Gln-192, and Arg-194 each bind UDP-N-acetyl-alpha-D-muramoyl-L-alanyl-D-glutamate. Residue Lys-226 is modified to N6-carboxylysine. Residues Arg-398, 421-424 (DNPR), Gly-473, and Glu-477 each bind meso-2,6-diaminopimelate. The Meso-diaminopimelate recognition motif signature appears at 421-424 (DNPR).

The protein belongs to the MurCDEF family. MurE subfamily. Mg(2+) serves as cofactor. In terms of processing, carboxylation is probably crucial for Mg(2+) binding and, consequently, for the gamma-phosphate positioning of ATP.

The protein localises to the cytoplasm. The catalysed reaction is UDP-N-acetyl-alpha-D-muramoyl-L-alanyl-D-glutamate + meso-2,6-diaminopimelate + ATP = UDP-N-acetyl-alpha-D-muramoyl-L-alanyl-gamma-D-glutamyl-meso-2,6-diaminopimelate + ADP + phosphate + H(+). The protein operates within cell wall biogenesis; peptidoglycan biosynthesis. Catalyzes the addition of meso-diaminopimelic acid to the nucleotide precursor UDP-N-acetylmuramoyl-L-alanyl-D-glutamate (UMAG) in the biosynthesis of bacterial cell-wall peptidoglycan. This is UDP-N-acetylmuramoyl-L-alanyl-D-glutamate--2,6-diaminopimelate ligase from Janthinobacterium sp. (strain Marseille) (Minibacterium massiliensis).